A 337-amino-acid polypeptide reads, in one-letter code: Nodulation protein D 2 (337 aa).

One can recognise an HTH lysR-type domain in the interval 6–63; it reads LDLNLLVVLDSLMTARNLTAAARSINLSQPAMSAAVARLRAYFGDELFTMRGRTLVPT. The H-T-H motif DNA-binding region spans 23-42; that stretch reads LTAAARSINLSQPAMSAAVA.

The protein belongs to the LysR transcriptional regulatory family.

Functionally, nodD regulates the expression of the nodABCFE genes which encode other nodulation proteins. NodD is also a negative regulator of its own expression. Binds flavonoids as inducers. This Bradyrhizobium sp. (strain NC92) protein is Nodulation protein D 2 (nodD2).